A 250-amino-acid polypeptide reads, in one-letter code: HTH-type transcriptional regulator KipR (250 aa).

In terms of domain architecture, HTH iclR-type spans 5–65 (NKTVVKSMAL…DASGAYSLGL (61 aa)). Residues 26 to 45 (LSELVSLTGMPKTSVHRMVS) constitute a DNA-binding region (H-T-H motif). The IclR-ED domain occupies 80-249 (IRKIAKPVME…ALQISRKIGY (170 aa)).

In terms of biological role, transcriptional repressor of the kip gene-containing operon. The protein is HTH-type transcriptional regulator KipR (kipR) of Bacillus subtilis (strain 168).